Here is a 201-residue protein sequence, read N- to C-terminus: Probable DNA replication complex GINS protein PSF1 (201 aa).

This sequence belongs to the GINS1/PSF1 family. As to quaternary structure, component of the GINS complex which is a heterotetramer of gins1, gins2, gins3 and gins4.

The protein resides in the nucleus. The GINS complex plays an essential role in the initiation of DNA replication. This is Probable DNA replication complex GINS protein PSF1 from Caenorhabditis briggsae.